The chain runs to 548 residues: Chaperonin GroEL (548 aa).

Residues 30-33 (TLGP), Lys51, 87-91 (DGTTT), Gly415, 479-481 (NAA), and Asp495 contribute to the ATP site.

It belongs to the chaperonin (HSP60) family. In terms of assembly, forms a cylinder of 14 subunits composed of two heptameric rings stacked back-to-back. Interacts with the co-chaperonin GroES.

The protein resides in the cytoplasm. The catalysed reaction is ATP + H2O + a folded polypeptide = ADP + phosphate + an unfolded polypeptide.. Functionally, together with its co-chaperonin GroES, plays an essential role in assisting protein folding. The GroEL-GroES system forms a nano-cage that allows encapsulation of the non-native substrate proteins and provides a physical environment optimized to promote and accelerate protein folding. The protein is Chaperonin GroEL of Escherichia fergusonii (strain ATCC 35469 / DSM 13698 / CCUG 18766 / IAM 14443 / JCM 21226 / LMG 7866 / NBRC 102419 / NCTC 12128 / CDC 0568-73).